The following is a 699-amino-acid chain: Receptor-type tyrosine-protein phosphatase epsilon (699 aa).

A signal peptide spans 1-19 (MEPFCPLLLASFSLSLARA). Residues 20-36 (GQGNDTTPTESNWTSTT) show a composition bias toward low complexity. Positions 20-40 (GQGNDTTPTESNWTSTTAGPP) are disordered. The Extracellular segment spans residues 20–45 (GQGNDTTPTESNWTSTTAGPPDPGAS). 2 N-linked (GlcNAc...) asparagine glycosylation sites follow: Asn-23 and Asn-31. Residues 46 to 68 (QPLLTWLLLPLLLLLFLLAAYFF) traverse the membrane as a helical segment. Residues 69–699 (RFRKQRKAVV…DIFSDYANFK (631 aa)) lie on the Cytoplasmic side of the membrane. Tyrosine-protein phosphatase domains follow at residues 134-393 (FREE…LLEY) and 425-688 (LEEE…VQDF). Substrate contacts are provided by residues Asp-302, 334 to 340 (CSAGVGR), and Gln-378. Residue Cys-334 is the Phosphocysteine intermediate of the active site. Cys-629 acts as the Phosphocysteine intermediate in catalysis. Tyr-695 bears the Phosphotyrosine mark.

The protein belongs to the protein-tyrosine phosphatase family. Receptor class 4 subfamily. As to quaternary structure, monomer. Isoform 2: Homodimer. Can form oligomers. Dimerization is increased by oxidative stress and decreased by EGFR. Isoform 2 interacts with GRB2. In terms of processing, a catalytically active cytoplasmic form (p65) is produced by proteolytic cleavage of either isoform 1, isoform 2 or isoform 3. Phosphorylated on tyrosine residues by tyrosine kinase Neu. Post-translationally, glycosylated. In terms of tissue distribution, isoform 2 is expressed in the spleen and thymus (at protein level). Detected in fibroblasts, myeloid cells, macrophages, and T-cells but not in B-cell lines. Isoform 1 and isoform 2 are expressed predominantly in the brain, testes, and lungs, with lower levels present in lymph nodes, thymus, spleen, heart and mammary glands. Isoform 1 is expressed in osteoclasts and not in osteoblasts and its expression is related to osteoclast differentiation. It is also expressed in the erythrocytes. Isoform 2 is strongly expressed in skeletal muscle and L6 skeletal muscle cell line.

It is found in the cell membrane. The protein resides in the cytoplasm. The enzyme catalyses O-phospho-L-tyrosyl-[protein] + H2O = L-tyrosyl-[protein] + phosphate. Its activity is regulated as follows. Inhibited by alendronate (ALN), orthovanadate, and phenylarsine oxide (PAO). Its function is as follows. Acts as a negative regulator of insulin receptor (IR) signaling and is involved in insulin-induced glucose metabolism mainly through direct dephosphorylation and inactivation of IR in hepatocytes and liver. Plays a critical role in signaling transduction pathways and phosphoprotein network topology in red blood cells. May play a role in osteoclast formation and function. Acts as a negative regulator of insulin receptor (IR) signaling in skeletal muscle. Regulates insulin-induced tyrosine phosphorylation of insulin receptor (IR) and insulin receptor substrate 1 (IRS-1), phosphorylation of protein kinase B and glycogen synthase kinase-3 and insulin induced stimulation of glucose uptake. Functionally, isoform 1 and isoform 2 act as a negative regulator of FceRI-mediated signal transduction leading to cytokine production and degranulation, most likely by acting at the level of SYK to affect downstream events such as phosphorylation of SLP76 and LAT and mobilization of Ca(2+). This Mus musculus (Mouse) protein is Receptor-type tyrosine-protein phosphatase epsilon (Ptpre).